Reading from the N-terminus, the 1478-residue chain is Serine/threonine-protein kinase BCK1/SLK1/SSP31 (1478 aa).

Disordered regions lie at residues 1–70, 99–126, 217–359, and 373–427; these read MPFL…TSSQ, TSFT…GGNS, NVTN…RRHH, and FGSG…KGNL. Low complexity predominate over residues 29 to 49; the sequence is PTSSVASTKSSSKSPRATSRK. 2 stretches are compositionally biased toward polar residues: residues 58 to 70 and 99 to 110; these read QFPN…TSSQ and TSFTNSSYKNDN. Positions 111–126 are enriched in low complexity; that stretch reads GPSSLSDSRKSSGGNS. Residues 223 to 233 are compositionally biased toward basic residues; the sequence is IRQKSASKLKS. Polar residues-rich tracts occupy residues 253–273 and 281–297; these read DISN…SGPS and LHST…SSLY. Composition is skewed to low complexity over residues 298-320 and 342-353; these read RRSF…SPSN and SASPPASPSYPS. Polar residues-rich tracts occupy residues 386-396 and 407-420; these read NPQGHSLSSEN and TNVS…SLPT. T407 is subject to Phosphothreonine. Residues S411 and S491 each carry the phosphoserine modification. The segment at 644–671 is disordered; the sequence is KPKPAPLTSENNVPLKSVKSKSSMRSGT. Residues 659–671 are compositionally biased toward low complexity; it reads KSVKSKSSMRSGT. S747 is subject to Phosphoserine. Disordered regions lie at residues 752–877, 895–939, 960–1021, and 1053–1116; these read LNLP…ASTH, KTDQ…RGNS, ADAP…TQDK, and TEGI…TPKR. The segment covering 765-777 has biased composition (polar residues); sequence TPITENESKSSFQ. Over residues 779 to 809 the composition is skewed to basic and acidic residues; the sequence is LRKDEGTEIDFNHRRESPYTKPELAPKREAP. Residues 813–827 show a composition bias toward polar residues; sequence ANTSPQRTLSTSKQN. S816 carries the phosphoserine modification. Low complexity-rich tracts occupy residues 851 to 870 and 914 to 925; these read QLLS…LTSS and NRSNSTVSTSNS. The span at 967-977 shows a compositional bias: acidic residues; that stretch reads DSDDSDDDSSS. A compositionally biased stretch (basic and acidic residues) spans 994–1011; the sequence is NENKKDEKSDNSSTHSDE. S1058 and S1061 each carry phosphoserine. Low complexity predominate over residues 1058–1083; the sequence is SPTSPKSLDSLLSPKNVASSRTEPST. S1134 is modified (phosphoserine; by PKC). The Protein kinase domain maps to 1175-1440; sequence WMKGEMIGKG…ANELLSHPFS (266 aa). Residues 1181-1189 and K1204 contribute to the ATP site; that span reads IGKGSFGAV. D1303 functions as the Proton acceptor in the catalytic mechanism.

The protein belongs to the protein kinase superfamily. STE Ser/Thr protein kinase family. MAP kinase kinase kinase subfamily.

It is found in the cytoplasm. It carries out the reaction L-seryl-[protein] + ATP = O-phospho-L-seryl-[protein] + ADP + H(+). The catalysed reaction is L-threonyl-[protein] + ATP = O-phospho-L-threonyl-[protein] + ADP + H(+). In terms of biological role, serine/threonine protein kinase involved in a signal transduction pathway that plays a role in yeast cell morphogenesis and cell growth. This pathway seems to start by SMP3; then involve the kinase PKC1 that may act on this kinase. BCK1 probably phosphorylates MKK1 and MKK2 which themselves phosphorylate the MPK1 kinase. This is Serine/threonine-protein kinase BCK1/SLK1/SSP31 (BCK1) from Saccharomyces cerevisiae (strain ATCC 204508 / S288c) (Baker's yeast).